The following is a 217-amino-acid chain: High frequency lysogenization protein HflD homolog (217 aa).

Belongs to the HflD family.

The protein resides in the cytoplasm. Its subcellular location is the cell membrane. This Buchnera aphidicola subsp. Baizongia pistaciae (strain Bp) protein is High frequency lysogenization protein HflD homolog.